The chain runs to 266 residues: Putative deoxyribonuclease tatdn3 (266 aa).

6 residues coordinate Zn(2+): His-9, His-11, Glu-103, His-143, His-166, and Asp-214.

Belongs to the metallo-dependent hydrolases superfamily. TatD-type hydrolase family. Mn(2+) serves as cofactor. Ca(2+) is required as a cofactor. It depends on Mg(2+) as a cofactor. Requires Zn(2+) as cofactor.

Its subcellular location is the nucleus. With respect to regulation, the 3'-exonuclease activity is sensitive to the metal ion present in the active site, whereas the AP endodeoxyribonuclease activity is observed in a variety of divalent metal cofactors. 3'-exoxonuclease activity is suppressed in the presence of Ca(2+), Zn(2+) and Ni(2+). Functionally, exhibits 3'-exonuclease activities and apurinic/apyrimidinic (AP) endonuclease (in vitro). Show preferential AP endonuclease activity on double-stranded DNA substrates and 3'- exonuclease activity on single-stranded DNA. The polypeptide is Putative deoxyribonuclease tatdn3 (tatdn3) (Danio rerio (Zebrafish)).